The following is a 335-amino-acid chain: Beta-ketoacyl-[acyl-carrier-protein] synthase III 1 (335 aa).

Active-site residues include C116 and H256. Positions 257-261 (QANQR) are ACP-binding. N286 is an active-site residue.

This sequence belongs to the thiolase-like superfamily. FabH family. In terms of assembly, homodimer.

The protein resides in the cytoplasm. The catalysed reaction is malonyl-[ACP] + acetyl-CoA + H(+) = 3-oxobutanoyl-[ACP] + CO2 + CoA. The protein operates within lipid metabolism; fatty acid biosynthesis. Catalyzes the condensation reaction of fatty acid synthesis by the addition to an acyl acceptor of two carbons from malonyl-ACP. Catalyzes the first condensation reaction which initiates fatty acid synthesis and may therefore play a role in governing the total rate of fatty acid production. Possesses both acetoacetyl-ACP synthase and acetyl transacylase activities. Its substrate specificity determines the biosynthesis of branched-chain and/or straight-chain of fatty acids. In Bacteroides thetaiotaomicron (strain ATCC 29148 / DSM 2079 / JCM 5827 / CCUG 10774 / NCTC 10582 / VPI-5482 / E50), this protein is Beta-ketoacyl-[acyl-carrier-protein] synthase III 1.